Here is a 654-residue protein sequence, read N- to C-terminus: Polyvinylalcohol dehydrogenase (654 aa).

A signal peptide spans 1–32 (MGSHAWGGAVFSAATLIAFGSVVHASGTVAET). The Cytochrome c domain occupies 42 to 159 (ADQLDGETLY…AANQWNGWST (118 aa)). Heme c contacts are provided by C55, C58, and H59.

The protein belongs to the bacterial PQQ dehydrogenase family. In terms of assembly, monomer. Pyrroloquinoline quinone is required as a cofactor.

The protein resides in the periplasm. The catalysed reaction is a polyvinyl alcohol + 2n Fe(III)-[cytochrome c] = an oxidized polyvinyl alcohol + 2n Fe(II)-[cytochrome c] + 2n H(+). Functionally, catalyzes the oxidation of polyvinyl alcohol (PVA) in the polyvinyl alcohol degradation pathway. The polypeptide is Polyvinylalcohol dehydrogenase (pvadh) (Sphingopyxis sp. (strain 113P3)).